Consider the following 471-residue polypeptide: Glutamate--tRNA ligase (471 aa).

A 'HIGH' region motif is present at residues P9–G19. C98, C100, C125, and H127 together coordinate Zn(2+). Residues K237–R241 carry the 'KMSKS' region motif. K240 lines the ATP pocket.

It belongs to the class-I aminoacyl-tRNA synthetase family. Glutamate--tRNA ligase type 1 subfamily. In terms of assembly, monomer. It depends on Zn(2+) as a cofactor.

Its subcellular location is the cytoplasm. The catalysed reaction is tRNA(Glu) + L-glutamate + ATP = L-glutamyl-tRNA(Glu) + AMP + diphosphate. Functionally, catalyzes the attachment of glutamate to tRNA(Glu) in a two-step reaction: glutamate is first activated by ATP to form Glu-AMP and then transferred to the acceptor end of tRNA(Glu). The polypeptide is Glutamate--tRNA ligase (Shigella sonnei (strain Ss046)).